The chain runs to 344 residues: Dihydroorotase (344 aa).

Residues His14 and His16 each coordinate Zn(2+). Substrate is bound by residues 16 to 18 (HLR) and Asn42. Lys100, His137, and His175 together coordinate Zn(2+). Lys100 is modified (N6-carboxylysine). His137 provides a ligand contact to substrate. Leu220 serves as a coordination point for substrate. Residue Asp248 coordinates Zn(2+). Asp248 is a catalytic residue. His252 and Ala264 together coordinate substrate.

It belongs to the metallo-dependent hydrolases superfamily. DHOase family. Class II DHOase subfamily. As to quaternary structure, homodimer. Zn(2+) serves as cofactor.

The catalysed reaction is (S)-dihydroorotate + H2O = N-carbamoyl-L-aspartate + H(+). The protein operates within pyrimidine metabolism; UMP biosynthesis via de novo pathway; (S)-dihydroorotate from bicarbonate: step 3/3. Functionally, catalyzes the reversible cyclization of carbamoyl aspartate to dihydroorotate. The protein is Dihydroorotase of Ralstonia nicotianae (strain ATCC BAA-1114 / GMI1000) (Ralstonia solanacearum).